Here is a 528-residue protein sequence, read N- to C-terminus: Peptide chain release factor 3 (528 aa).

A tr-type G domain is found at 11–279 (EKRRTFAIIS…GLVEWAPKPL (269 aa)). GTP-binding positions include 20–27 (SHPDAGKT), 88–92 (DTPGH), and 142–145 (NKCD).

This sequence belongs to the TRAFAC class translation factor GTPase superfamily. Classic translation factor GTPase family. PrfC subfamily.

The protein resides in the cytoplasm. Increases the formation of ribosomal termination complexes and stimulates activities of RF-1 and RF-2. It binds guanine nucleotides and has strong preference for UGA stop codons. It may interact directly with the ribosome. The stimulation of RF-1 and RF-2 is significantly reduced by GTP and GDP, but not by GMP. This chain is Peptide chain release factor 3, found in Psychromonas ingrahamii (strain DSM 17664 / CCUG 51855 / 37).